Reading from the N-terminus, the 189-residue chain is UPF0301 protein PputW619_0469 (189 aa).

Belongs to the UPF0301 (AlgH) family.

The protein is UPF0301 protein PputW619_0469 of Pseudomonas putida (strain W619).